Consider the following 393-residue polypeptide: Beta-1,4-galactosyltransferase 3 (393 aa).

Residues 1–10 are Cytoplasmic-facing; the sequence is MLRRLLERPC. The chain crosses the membrane as a helical; Signal-anchor for type II membrane protein span at residues 11–31; it reads TLALLVGSQLAVMMYLSLGGF. Topologically, residues 32 to 393 are lumenal; the sequence is RSLSALFGRD…ANHTALRGSH (362 aa). N-linked (GlcNAc...) asparagine glycosylation occurs at Asn57. Cys77 and Cys119 are joined by a disulfide. Residue 130 to 134 coordinates UDP-alpha-D-galactose; it reads PHRAR. N-linked (GlcNAc...) asparagine glycosylation occurs at Asn166. UDP-alpha-D-galactose is bound by residues 169-171, 196-197, Tyr226, and Trp258; these read FNR and VD. Cys190 and Cys209 form a disulfide bridge. Residue Asp197 coordinates Mn(2+). 260–263 lines the N-acetyl-D-glucosamine pocket; the sequence is GEDD. Residue His291 participates in Mn(2+) binding. Residue 291–293 coordinates UDP-alpha-D-galactose; that stretch reads HRG. N-acetyl-D-glucosamine is bound at residue Arg303. Residues Asn337 and Asn385 are each glycosylated (N-linked (GlcNAc...) asparagine). Residues 339-393 form a disordered region; it reads TADIGTDPRGPRAPSGPRYPPGSSQAFRQEMLQRRPPARPGPPPTANHTALRGSH.

This sequence belongs to the glycosyltransferase 7 family. The cofactor is Mn(2+).

It is found in the golgi apparatus. The protein localises to the golgi stack membrane. It carries out the reaction an N-acetyl-beta-D-glucosaminyl derivative + UDP-alpha-D-galactose = a beta-D-galactosyl-(1-&gt;4)-N-acetyl-beta-D-glucosaminyl derivative + UDP + H(+). The catalysed reaction is N-acetyl-D-glucosamine + UDP-alpha-D-galactose = beta-D-galactosyl-(1-&gt;4)-N-acetyl-D-glucosamine + UDP + H(+). It catalyses the reaction a beta-D-GlcNAc-(1-&gt;3)-beta-D-Gal-(1-&gt;4)-beta-D-Glc-(1&lt;-&gt;1)-Cer(d18:1(4E)) + UDP-alpha-D-galactose = a neolactoside nLc4Cer(d18:1(4E)) + UDP + H(+). The enzyme catalyses a beta-D-glucosylceramide + UDP-alpha-D-galactose = a beta-D-galactosyl-(1-&gt;4)-beta-D-glucosyl-(1&lt;-&gt;1)-ceramide + UDP + H(+). It carries out the reaction a neolactoside IV(3)-beta-GlcNAc-nLc4Cer + UDP-alpha-D-galactose = a neolactoside nLc6Cer + UDP + H(+). Its pathway is protein modification; protein glycosylation. Its function is as follows. Responsible for the synthesis of complex-type N-linked oligosaccharides in many glycoproteins as well as the carbohydrate moieties of glycolipids. The polypeptide is Beta-1,4-galactosyltransferase 3 (B4GALT3) (Pongo abelii (Sumatran orangutan)).